We begin with the raw amino-acid sequence, 170 residues long: Siroheme decarboxylase NirL subunit (170 aa).

It belongs to the Ahb/Nir family. Probably forms a complex composed of NirD, NirL, NirG and NirH. All proteins are required for the total conversion of siroheme to didecarboxysiroheme.

The enzyme catalyses siroheme + 2 H(+) = 12,18-didecarboxysiroheme + 2 CO2. It participates in porphyrin-containing compound metabolism. Involved in heme d1 biosynthesis. Catalyzes the decarboxylation of siroheme into didecarboxysiroheme. The protein is Siroheme decarboxylase NirL subunit of Stutzerimonas stutzeri (Pseudomonas stutzeri).